The sequence spans 174 residues: RNA pyrophosphohydrolase (174 aa).

The Nudix hydrolase domain occupies 6–149 (GYRPNVGIIL…KRDVYLGALK (144 aa)). A Nudix box motif is present at residues 38–59 (GGIKPGESPETAMYRELYEEVG).

The protein belongs to the Nudix hydrolase family. RppH subfamily. A divalent metal cation is required as a cofactor.

In terms of biological role, accelerates the degradation of transcripts by removing pyrophosphate from the 5'-end of triphosphorylated RNA, leading to a more labile monophosphorylated state that can stimulate subsequent ribonuclease cleavage. The protein is RNA pyrophosphohydrolase of Neisseria meningitidis serogroup C (strain 053442).